Consider the following 301-residue polypeptide: Protoheme IX farnesyltransferase 1 (301 aa).

A run of 9 helical transmembrane segments spans residues 29 to 49 (VVALMLLTVLVGMCLAVPHAV), 51 to 71 (VQPLLAGMLGIAMMAGSAAAL), 101 to 121 (ALIFAASLGSLGFIVLYSLVN), 123 to 143 (LTAWLTFASLIGYALVYTAYL), 150 to 170 (NIVIGGLAGAMPPLLGWTAVT), 177 to 197 (ALLLVIIIFTWTPPHFWALAI), 223 to 243 (CILLYTVLLAIACLLPVLVGM), 244 to 264 (CGPVYFVCSSLLSTGFIYKAW), and 275 to 295 (AMQVFRFSIYHLMLLFMALLL).

Belongs to the UbiA prenyltransferase family. Protoheme IX farnesyltransferase subfamily.

The protein localises to the cell inner membrane. The catalysed reaction is heme b + (2E,6E)-farnesyl diphosphate + H2O = Fe(II)-heme o + diphosphate. It participates in porphyrin-containing compound metabolism; heme O biosynthesis; heme O from protoheme: step 1/1. Converts heme B (protoheme IX) to heme O by substitution of the vinyl group on carbon 2 of heme B porphyrin ring with a hydroxyethyl farnesyl side group. The sequence is that of Protoheme IX farnesyltransferase 1 from Shewanella baltica (strain OS185).